The sequence spans 431 residues: Translation initiation factor 2 subunit gamma (431 aa).

Positions 26-223 (QPCVNIGMVG…ALETQIPTPS (198 aa)) constitute a tr-type G domain. Residues 35 to 42 (GHVDHGKT) are G1. Mg(2+) is bound by residues aspartate 38, threonine 42, glycine 63, and serine 65. 38–43 (DHGKTT) provides a ligand contact to GTP. The tract at residues 63-67 (GISIR) is G2. Cysteine 78, cysteine 81, cysteine 93, and cysteine 96 together coordinate Zn(2+). A G3 region spans residues 110–113 (DAPG). GTP contacts are provided by residues 166–169 (NKID) and 201–203 (SAQ). The G4 stretch occupies residues 166–169 (NKID). A G5 region spans residues 201 to 203 (SAQ).

It belongs to the TRAFAC class translation factor GTPase superfamily. Classic translation factor GTPase family. EIF2G subfamily. Heterotrimer composed of an alpha, a beta and a gamma chain. Mg(2+) serves as cofactor.

It catalyses the reaction GTP + H2O = GDP + phosphate + H(+). EIF-2 functions in the early steps of protein synthesis by forming a ternary complex with GTP and initiator tRNA. The sequence is that of Translation initiation factor 2 subunit gamma from Methanosarcina mazei (strain ATCC BAA-159 / DSM 3647 / Goe1 / Go1 / JCM 11833 / OCM 88) (Methanosarcina frisia).